The chain runs to 285 residues: Gap junction Cx32.2 protein (285 aa).

The Cytoplasmic segment spans residues Gly2–Thr19. The helical transmembrane segment at Val20–Gly40 threads the bilayer. Residues Ala41–Arg76 are Extracellular-facing. A helical membrane pass occupies residues Phe77–Ile99. Residues Ile100–Lys148 are Cytoplasmic-facing. A helical membrane pass occupies residues Ile149 to Phe171. At Pro172 to Ile194 the chain is on the extracellular side. Residues Phe195–Leu217 traverse the membrane as a helical segment. The Cytoplasmic segment spans residues Ile218 to His285. Residues Glu264–His285 form a disordered region. The segment covering Gly275–His285 has biased composition (basic and acidic residues).

This sequence belongs to the connexin family. Beta-type (group I) subfamily. In terms of assembly, a connexon is composed of a hexamer of connexins.

It is found in the cell membrane. It localises to the cell junction. The protein resides in the gap junction. Its function is as follows. One gap junction consists of a cluster of closely packed pairs of transmembrane channels, the connexons, through which materials of low MW diffuse from one cell to a neighboring cell. May be involved in ovarian follicular maturation. This is Gap junction Cx32.2 protein from Micropogonias undulatus (Atlantic croaker).